A 1446-amino-acid chain; its full sequence is DNA polymerase III PolC-type (1446 aa).

The 157-residue stretch at 425 to 581 (YVIFDVETTG…ADAESTGYLL (157 aa)) folds into the Exonuclease domain.

Belongs to the DNA polymerase type-C family. PolC subfamily.

It localises to the cytoplasm. It catalyses the reaction DNA(n) + a 2'-deoxyribonucleoside 5'-triphosphate = DNA(n+1) + diphosphate. Its function is as follows. Required for replicative DNA synthesis. This DNA polymerase also exhibits 3' to 5' exonuclease activity. The protein is DNA polymerase III PolC-type of Latilactobacillus sakei subsp. sakei (strain 23K) (Lactobacillus sakei subsp. sakei).